Here is a 359-residue protein sequence, read N- to C-terminus: Prostaglandin F2-alpha receptor (359 aa).

Residues 1–31 (MSMNNSKQLVSPAAALLSNTTCQTENRLSVF) are Extracellular-facing. 2 N-linked (GlcNAc...) asparagine glycosylation sites follow: N4 and N19. The helical transmembrane segment at 32 to 54 (FSVIFMTVGILSNSLAIAILMKA) threads the bilayer. The Cytoplasmic portion of the chain corresponds to 55 to 69 (YQRFRQKSKASFLLL). Residues 70-90 (ASGLVITDFFGHLINGAIAVF) form a helical membrane-spanning segment. The Extracellular portion of the chain corresponds to 91–109 (VYASDKEWIRFDQSNVLCS). C108 and C186 are disulfide-bonded. A helical transmembrane segment spans residues 110–131 (IFGICMVFSGLCPLLLGSVMAI). At 132–152 (ERCIGVTKPIFHSTKITSKHV) the chain is on the cytoplasmic side. The chain crosses the membrane as a helical span at residues 153-175 (KMMLSGVCLFAVFIALLPILGHR). The Extracellular segment spans residues 176–198 (DYKIQASRTWCFYNTEDIKDWED). The chain crosses the membrane as a helical span at residues 199–224 (RFYLLLFSFLGLLALGVSLLCNAITG). The Cytoplasmic segment spans residues 225 to 250 (ITLLRVKFKSQQHRQGRSHHLEMVIQ). A helical transmembrane segment spans residues 251–267 (LLAIMCVSCICWSPFLV). The Extracellular portion of the chain corresponds to 268 to 285 (TMANIGINGNHSLETCET). A helical transmembrane segment spans residues 286-307 (TLFALRMATWNQILDPWVYILL). Residues 308 to 359 (RKAVLKNLYKLASQCCGVHVISLHIWELSSIKNSLKVAAISESPVAEKSAST) lie on the Cytoplasmic side of the membrane.

It belongs to the G-protein coupled receptor 1 family. In terms of assembly, isoform 1 can form heterodimers with isoform 5 (and probably other isoforms). Eye.

Its subcellular location is the cell membrane. In terms of biological role, receptor for prostaglandin F2-alpha (PGF2-alpha). The activity of this receptor is mediated by G proteins which activate a phosphatidylinositol-calcium second messenger system. Initiates luteolysis in the corpus luteum. Isoforms 2 to 7 do not bind PGF2-alpha but are proposed to modulate signaling by participating in variant receptor complexes; heterodimers between isoform 1 and isoform 5 are proposed to be a receptor for prostamides including the synthetic analog bimatoprost. The sequence is that of Prostaglandin F2-alpha receptor (PTGFR) from Homo sapiens (Human).